Reading from the N-terminus, the 545-residue chain is CTP synthase (545 aa).

The amidoligase domain stretch occupies residues 1–267 (MTKFIFVTGG…AEQVLNLLQM (267 aa)). Residue S13 participates in CTP binding. S13 lines the UTP pocket. ATP is bound by residues 14–19 (SIGKGI) and D71. D71 and E141 together coordinate Mg(2+). CTP is bound by residues 148-150 (DIE), 188-193 (KTKPTQ), and K224. Residues 188–193 (KTKPTQ) and K224 contribute to the UTP site. The region spanning 292-534 (EIAIVGKYVQ…IQAAIALSLS (243 aa)) is the Glutamine amidotransferase type-1 domain. Position 354 (G354) interacts with L-glutamine. C381 (nucleophile; for glutamine hydrolysis) is an active-site residue. L-glutamine contacts are provided by residues 382 to 385 (LGMQ), E405, and R462. Residues H507 and E509 contribute to the active site.

Belongs to the CTP synthase family. In terms of assembly, homotetramer.

The enzyme catalyses UTP + L-glutamine + ATP + H2O = CTP + L-glutamate + ADP + phosphate + 2 H(+). The catalysed reaction is L-glutamine + H2O = L-glutamate + NH4(+). It carries out the reaction UTP + NH4(+) + ATP = CTP + ADP + phosphate + 2 H(+). The protein operates within pyrimidine metabolism; CTP biosynthesis via de novo pathway; CTP from UDP: step 2/2. Allosterically activated by GTP, when glutamine is the substrate; GTP has no effect on the reaction when ammonia is the substrate. The allosteric effector GTP functions by stabilizing the protein conformation that binds the tetrahedral intermediate(s) formed during glutamine hydrolysis. Inhibited by the product CTP, via allosteric rather than competitive inhibition. Its function is as follows. Catalyzes the ATP-dependent amination of UTP to CTP with either L-glutamine or ammonia as the source of nitrogen. Regulates intracellular CTP levels through interactions with the four ribonucleotide triphosphates. The polypeptide is CTP synthase (Nostoc punctiforme (strain ATCC 29133 / PCC 73102)).